Consider the following 228-residue polypeptide: L-ribulose-5-phosphate 4-epimerase UlaF (228 aa).

Residues 26-27, 43-44, and 72-73 each bind substrate; these read GN, SG, and SS. Residues Asp74, His93, and His95 each contribute to the Zn(2+) site. Residue Asp118 is the Proton donor/acceptor of the active site. His167 is a binding site for Zn(2+). The active-site Proton donor/acceptor is Tyr225.

The protein belongs to the aldolase class II family. AraD/FucA subfamily. It depends on Zn(2+) as a cofactor.

It catalyses the reaction L-ribulose 5-phosphate = D-xylulose 5-phosphate. It participates in cofactor degradation; L-ascorbate degradation; D-xylulose 5-phosphate from L-ascorbate: step 4/4. Catalyzes the isomerization of L-ribulose 5-phosphate to D-xylulose 5-phosphate. Is involved in the anaerobic L-ascorbate utilization. In Shigella flexneri, this protein is L-ribulose-5-phosphate 4-epimerase UlaF.